We begin with the raw amino-acid sequence, 481 residues long: Cardiolipin synthase A (481 aa).

2 helical membrane passes run 10 to 30 (FFGY…LHAL) and 40 to 60 (IAWA…YLIF). PLD phosphodiesterase domains lie at 220–247 (VNFR…GDEY) and 394–421 (QPGF…DNRS). Active-site residues include H225, K227, D232, H399, K401, and D406.

This sequence belongs to the phospholipase D family. Cardiolipin synthase subfamily. ClsA sub-subfamily.

It is found in the cell inner membrane. It catalyses the reaction 2 a 1,2-diacyl-sn-glycero-3-phospho-(1'-sn-glycerol) = a cardiolipin + glycerol. Its function is as follows. Catalyzes the reversible phosphatidyl group transfer from one phosphatidylglycerol molecule to another to form cardiolipin (CL) (diphosphatidylglycerol) and glycerol. The protein is Cardiolipin synthase A of Pseudomonas putida (Arthrobacter siderocapsulatus).